Reading from the N-terminus, the 652-residue chain is DNA ligase (652 aa).

NAD(+) contacts are provided by residues 29-33, 78-79, and Glu-107; these read DAEYD and SL. The N6-AMP-lysine intermediate role is filled by Lys-109. 4 residues coordinate NAD(+): Arg-130, Glu-164, Lys-278, and Lys-302. Residues Cys-395, Cys-398, Cys-413, and Cys-418 each contribute to the Zn(2+) site. A BRCT domain is found at 577–652; the sequence is ASDAALTGMT…IKDEAWLESL (76 aa).

This sequence belongs to the NAD-dependent DNA ligase family. LigA subfamily. It depends on Mg(2+) as a cofactor. Requires Mn(2+) as cofactor.

It carries out the reaction NAD(+) + (deoxyribonucleotide)n-3'-hydroxyl + 5'-phospho-(deoxyribonucleotide)m = (deoxyribonucleotide)n+m + AMP + beta-nicotinamide D-nucleotide.. Functionally, DNA ligase that catalyzes the formation of phosphodiester linkages between 5'-phosphoryl and 3'-hydroxyl groups in double-stranded DNA using NAD as a coenzyme and as the energy source for the reaction. It is essential for DNA replication and repair of damaged DNA. The polypeptide is DNA ligase (Streptococcus mutans serotype c (strain ATCC 700610 / UA159)).